A 241-amino-acid polypeptide reads, in one-letter code: Sugar fermentation stimulation protein homolog (241 aa).

Belongs to the SfsA family.

This chain is Sugar fermentation stimulation protein homolog, found in Hahella chejuensis (strain KCTC 2396).